A 249-amino-acid chain; its full sequence is NAD(P)H-quinone oxidoreductase subunit K 2 (249 aa).

Cys-54, Cys-55, Cys-119, and Cys-150 together coordinate [4Fe-4S] cluster.

It belongs to the complex I 20 kDa subunit family. As to quaternary structure, NDH-1 can be composed of about 15 different subunits; different subcomplexes with different compositions have been identified which probably have different functions. Requires [4Fe-4S] cluster as cofactor.

The protein localises to the cell inner membrane. It catalyses the reaction a plastoquinone + NADH + (n+1) H(+)(in) = a plastoquinol + NAD(+) + n H(+)(out). The catalysed reaction is a plastoquinone + NADPH + (n+1) H(+)(in) = a plastoquinol + NADP(+) + n H(+)(out). Functionally, NDH-1 shuttles electrons from an unknown electron donor, via FMN and iron-sulfur (Fe-S) centers, to quinones in the respiratory and/or the photosynthetic chain. The immediate electron acceptor for the enzyme in this species is believed to be plastoquinone. Couples the redox reaction to proton translocation, and thus conserves the redox energy in a proton gradient. Cyanobacterial NDH-1 also plays a role in inorganic carbon-concentration. The polypeptide is NAD(P)H-quinone oxidoreductase subunit K 2 (Gloeobacter violaceus (strain ATCC 29082 / PCC 7421)).